We begin with the raw amino-acid sequence, 501 residues long: Bifunctional purine biosynthesis protein PurH (501 aa).

The 144-residue stretch at 1-144 folds into the MGS-like domain; the sequence is MKKRALISVF…KNFKDVVVLS (144 aa).

This sequence belongs to the PurH family.

It catalyses the reaction (6R)-10-formyltetrahydrofolate + 5-amino-1-(5-phospho-beta-D-ribosyl)imidazole-4-carboxamide = 5-formamido-1-(5-phospho-D-ribosyl)imidazole-4-carboxamide + (6S)-5,6,7,8-tetrahydrofolate. The catalysed reaction is IMP + H2O = 5-formamido-1-(5-phospho-D-ribosyl)imidazole-4-carboxamide. The protein operates within purine metabolism; IMP biosynthesis via de novo pathway; 5-formamido-1-(5-phospho-D-ribosyl)imidazole-4-carboxamide from 5-amino-1-(5-phospho-D-ribosyl)imidazole-4-carboxamide (10-formyl THF route): step 1/1. It participates in purine metabolism; IMP biosynthesis via de novo pathway; IMP from 5-formamido-1-(5-phospho-D-ribosyl)imidazole-4-carboxamide: step 1/1. The chain is Bifunctional purine biosynthesis protein PurH from Clostridium perfringens (strain 13 / Type A).